The primary structure comprises 354 residues: Histidinol-phosphate aminotransferase 1 (354 aa).

At K209 the chain carries N6-(pyridoxal phosphate)lysine.

The protein belongs to the class-II pyridoxal-phosphate-dependent aminotransferase family. Histidinol-phosphate aminotransferase subfamily. Homodimer. Pyridoxal 5'-phosphate serves as cofactor.

It catalyses the reaction L-histidinol phosphate + 2-oxoglutarate = 3-(imidazol-4-yl)-2-oxopropyl phosphate + L-glutamate. The protein operates within amino-acid biosynthesis; L-histidine biosynthesis; L-histidine from 5-phospho-alpha-D-ribose 1-diphosphate: step 7/9. This Oceanobacillus iheyensis (strain DSM 14371 / CIP 107618 / JCM 11309 / KCTC 3954 / HTE831) protein is Histidinol-phosphate aminotransferase 1 (hisC1).